The chain runs to 91 residues: Small ribosomal subunit protein bS20 (91 aa).

Belongs to the bacterial ribosomal protein bS20 family.

Functionally, binds directly to 16S ribosomal RNA. This chain is Small ribosomal subunit protein bS20, found in Mycoplasma mobile (strain ATCC 43663 / 163K / NCTC 11711) (Mesomycoplasma mobile).